We begin with the raw amino-acid sequence, 146 residues long: Phospholipase A2 PS22 (146 aa).

A signal peptide spans 1–19 (MYPAHLLVLLAVCVSLLGA). Residues 20–27 (ASVPPQPL) constitute a propeptide that is removed on maturation. Cystine bridges form between Cys38–Cys98, Cys54–Cys145, Cys56–Cys72, Cys71–Cys126, Cys78–Cys119, Cys87–Cys112, and Cys105–Cys117. Ca(2+) is bound by residues Tyr55, Gly57, and Gly59. His75 is a catalytic residue. Position 76 (Asp76) interacts with Ca(2+). Asp120 is a catalytic residue.

Belongs to the phospholipase A2 family. Group I subfamily. D49 sub-subfamily. Ca(2+) is required as a cofactor. As to expression, expressed by the venom gland.

The protein localises to the secreted. It catalyses the reaction a 1,2-diacyl-sn-glycero-3-phosphocholine + H2O = a 1-acyl-sn-glycero-3-phosphocholine + a fatty acid + H(+). Snake venom phospholipase A2 (PLA2) that inhibits collagen-induced platelet aggregation. PLA2 catalyzes the calcium-dependent hydrolysis of the 2-acyl groups in 3-sn-phosphoglycerides. In Drysdalia coronoides (White-lipped snake), this protein is Phospholipase A2 PS22.